Reading from the N-terminus, the 362-residue chain is 3-dehydroquinate synthase (362 aa).

NAD(+) is bound by residues 74–79 (DGEEHK), 108–112 (GVTGD), 132–133 (TT), Lys-145, and Lys-154. Positions 187, 250, and 267 each coordinate Zn(2+).

This sequence belongs to the sugar phosphate cyclases superfamily. Dehydroquinate synthase family. Requires Co(2+) as cofactor. It depends on Zn(2+) as a cofactor. NAD(+) serves as cofactor.

Its subcellular location is the cytoplasm. It catalyses the reaction 7-phospho-2-dehydro-3-deoxy-D-arabino-heptonate = 3-dehydroquinate + phosphate. It participates in metabolic intermediate biosynthesis; chorismate biosynthesis; chorismate from D-erythrose 4-phosphate and phosphoenolpyruvate: step 2/7. In terms of biological role, catalyzes the conversion of 3-deoxy-D-arabino-heptulosonate 7-phosphate (DAHP) to dehydroquinate (DHQ). The chain is 3-dehydroquinate synthase from Syntrophotalea carbinolica (strain DSM 2380 / NBRC 103641 / GraBd1) (Pelobacter carbinolicus).